Consider the following 361-residue polypeptide: Tetraacyldisaccharide 4'-kinase (361 aa).

68 to 75 lines the ATP pocket; it reads TVGGTGKT.

It belongs to the LpxK family.

The catalysed reaction is a lipid A disaccharide + ATP = a lipid IVA + ADP + H(+). The protein operates within glycolipid biosynthesis; lipid IV(A) biosynthesis; lipid IV(A) from (3R)-3-hydroxytetradecanoyl-[acyl-carrier-protein] and UDP-N-acetyl-alpha-D-glucosamine: step 6/6. Its function is as follows. Transfers the gamma-phosphate of ATP to the 4'-position of a tetraacyldisaccharide 1-phosphate intermediate (termed DS-1-P) to form tetraacyldisaccharide 1,4'-bis-phosphate (lipid IVA). This is Tetraacyldisaccharide 4'-kinase from Pelobacter propionicus (strain DSM 2379 / NBRC 103807 / OttBd1).